We begin with the raw amino-acid sequence, 865 residues long: FO synthase (865 aa).

The tract at residues 1-21 (MIEGVTELATPNVPPAPPSPS) is disordered. Radical SAM core domains lie at 76–320 (ITYS…LGPD) and 544–785 (VTYV…DNIQ). Residues 77–409 (TYSRNVFIPL…PRIGAHVAAL (333 aa)) form a cofG-like region. [4Fe-4S] cluster is bound by residues Cys-90, Cys-94, Cys-97, Cys-558, Cys-562, and Cys-565. The segment at 521-854 (DGAELDAVAA…RERTTVYGRV (334 aa)) is cofH-like.

In the N-terminal section; belongs to the radical SAM superfamily. CofG family. This sequence in the C-terminal section; belongs to the radical SAM superfamily. CofH family. Requires [4Fe-4S] cluster as cofactor.

The enzyme catalyses 5-amino-6-(D-ribitylamino)uracil + L-tyrosine + S-adenosyl-L-methionine = 5-amino-5-(4-hydroxybenzyl)-6-(D-ribitylimino)-5,6-dihydrouracil + 2-iminoacetate + 5'-deoxyadenosine + L-methionine + H(+). It catalyses the reaction 5-amino-5-(4-hydroxybenzyl)-6-(D-ribitylimino)-5,6-dihydrouracil + S-adenosyl-L-methionine = 7,8-didemethyl-8-hydroxy-5-deazariboflavin + 5'-deoxyadenosine + L-methionine + NH4(+) + H(+). It participates in cofactor biosynthesis; coenzyme F0 biosynthesis. In terms of biological role, catalyzes the radical-mediated synthesis of 7,8-didemethyl-8-hydroxy-5-deazariboflavin (FO) from 5-amino-6-(D-ribitylamino)uracil and L-tyrosine. This is FO synthase (fbiC) from Nocardia farcinica (strain IFM 10152).